The chain runs to 398 residues: Sphingosine 1-phosphate receptor 5 (398 aa).

At 1–40 the chain is on the extracellular side; the sequence is MESGLLRPAPVSEVIVLHYNYTGKLRGARYQPGAGLRADA. N20 carries an N-linked (GlcNAc...) asparagine glycan. A helical transmembrane segment spans residues 41–61; the sequence is VVCLAVCAFIVLENLAVLLVL. The Cytoplasmic segment spans residues 62–70; it reads GRHPRFHAP. The helical transmembrane segment at 71-91 threads the bilayer; it reads MFLLLGSLTLSDLLAGAAYAA. Residues 92–111 lie on the Extracellular side of the membrane; sequence NILLSGPLTLKLSPALWFAR. Residues 112–132 traverse the membrane as a helical segment; it reads EGGVFVALTASVLSLLAIALE. Residues 133–151 lie on the Cytoplasmic side of the membrane; sequence RSLTMARRGPAPVSSRGRT. The helical transmembrane segment at 152-172 threads the bilayer; the sequence is LAMAAAAWGVSLLLGLLPALG. The Extracellular segment spans residues 173-192; it reads WNCLGRLDACSTVLPLYAKA. Residues 193–213 traverse the membrane as a helical segment; it reads YVLFCVLAFVGILAAICALYA. The Cytoplasmic segment spans residues 214 to 252; it reads RIYCQVRANARRLPARPGTAGTTSTRARRKPRSLALLRT. Residues 253 to 273 traverse the membrane as a helical segment; sequence LSVVLLAFVACWGPLFLLLLL. Topologically, residues 274-287 are extracellular; the sequence is DVACPARTCPVLLQ. A helical transmembrane segment spans residues 288-308; that stretch reads ADPFLGLAMANSLLNPIIYTL. Residues 309-398 are Cytoplasmic-facing; it reads TNRDLRHALL…RTLVSEPAAD (90 aa). C323 carries the S-palmitoyl cysteine lipid modification. A disordered region spans residues 329–398; it reads GRDPSGSQQS…RTLVSEPAAD (70 aa). The segment covering 333 to 347 has biased composition (low complexity); sequence SGSQQSASAAEASGG. Residue S381 is modified to Phosphoserine.

It belongs to the G-protein coupled receptor 1 family. As to expression, widely expressed in the brain, most prominently in the corpus callosum, which is predominantly white matter. Detected in spleen, peripheral blood leukocytes, placenta, lung, aorta and fetal spleen. Low-level signal detected in many tissue extracts. Overexpressed in leukemic large granular lymphocytes. Isoform 1 is predominantly expressed in peripheral tissues. Isoform 2 is expressed in brain, spleen and peripheral blood leukocytes.

The protein localises to the cell membrane. In terms of biological role, receptor for the lysosphingolipid sphingosine 1-phosphate (S1P). S1P is a bioactive lysophospholipid that elicits diverse physiological effect on most types of cells and tissues. Is coupled to both the G(i/0)alpha and G(12) subclass of heteromeric G-proteins. May play a regulatory role in the transformation of radial glial cells into astrocytes and may affect proliferative activity of these cells. The sequence is that of Sphingosine 1-phosphate receptor 5 (S1PR5) from Homo sapiens (Human).